A 293-amino-acid polypeptide reads, in one-letter code: DOMON domain-containing protein FRRS1L (293 aa).

Positions 1–28 are cleaved as a signal peptide; that stretch reads MAGQPLRRPAWVPLLLRLLLAGIAACDA. The disordered stretch occupies residues 29–60; it reads SPADDSAGPGGRGPRGRARGDAGADEAVPRHD. Positions 46 to 60 are enriched in basic and acidic residues; the sequence is ARGDAGADEAVPRHD. Residues 119–234 form the DOMON domain; the sequence is CDYFLSYRMI…WYYLFAWGPA (116 aa). A helical membrane pass occupies residues 271-291; sequence TFSSPFCLLLIVALTFYLLMG.

Component of the outer core of AMPAR complex. AMPAR complex consists of an inner core made of 4 pore-forming GluA/GRIA proteins (GRIA1, GRIA2, GRIA3 and GRIA4) and 4 major auxiliary subunits arranged in a twofold symmetry. One of the two pairs of distinct binding sites is occupied either by CNIH2, CNIH3 or CACNG2, CACNG3. The other harbors CACNG2, CACNG3, CACNG4, CACNG8 or GSG1L. This inner core of AMPAR complex is complemented by outer core constituents binding directly to the GluA/GRIA proteins at sites distinct from the interaction sites of the inner core constituents. Outer core constituents include at least PRRT1, PRRT2, CKAMP44/SHISA9, FRRS1L and NRN1. The proteins of the inner and outer core serve as a platform for other, more peripherally associated AMPAR constituents. Alone or in combination, these auxiliary subunits control the gating and pharmacology of the AMPAR complex and profoundly impact their biogenesis and protein processing. In terms of tissue distribution, expressed in the brain (at protein level). In embryos expression is evident in the ventral forebrain, but a lower level is seen in the remainder of the embryos. In the adult brain, expressed in the cortex, cerebellum, hippocampus and basal ganglia.

It is found in the cell membrane. The protein localises to the synapse. Important modulator of glutamate signaling pathway. The chain is DOMON domain-containing protein FRRS1L (Frrs1l) from Mus musculus (Mouse).